The following is a 140-amino-acid chain: Large ribosomal subunit protein uL16 (140 aa).

Belongs to the universal ribosomal protein uL16 family. As to quaternary structure, part of the 50S ribosomal subunit.

Functionally, binds 23S rRNA and is also seen to make contacts with the A and possibly P site tRNAs. The sequence is that of Large ribosomal subunit protein uL16 from Geotalea uraniireducens (strain Rf4) (Geobacter uraniireducens).